The following is a 987-amino-acid chain: Ephrin type-B receptor 2 (987 aa).

The first 19 residues, Met-1–Ala-19, serve as a signal peptide directing secretion. The Extracellular segment spans residues Val-20 to Leu-544. An Eph LBD domain is found at Glu-21–Gln-203. 2 cysteine pairs are disulfide-bonded: Cys-63–Cys-185 and Cys-98–Cys-108. N-linked (GlcNAc...) asparagine glycosylation is found at Asn-266, Asn-337, Asn-429, Asn-478, and Asn-483. 2 Fibronectin type-III domains span residues Ile-325–Ala-435 and Ala-436–Glu-531. Residues Ile-545 to Val-565 traverse the membrane as a helical segment. Residues Cys-566–Val-987 lie on the Cytoplasmic side of the membrane. The Protein kinase domain maps to Val-622–Ile-885. ATP is bound by residues Ile-628–Val-636 and Lys-654. Asp-747 serves as the catalytic Proton acceptor. A Glycyl lysine isopeptide (Lys-Gly) (interchain with G-Cter in ubiquitin) cross-link involves residue Lys-892. One can recognise an SAM domain in the interval Thr-914–Gln-978. A PDZ-binding motif is present at residues Val-985 to Val-987.

The protein belongs to the protein kinase superfamily. Tyr protein kinase family. Ephrin receptor subfamily. Heterotetramer upon binding of the ligand. The heterotetramer is composed of an ephrin dimer and a receptor dimer. Oligomerization is probably required to induce biological responses. Ligand binding induces cleavage by matrix metalloproteinases (MMPs) such as MMP7/MMP9, producing an EphB2/N-terminal fragment (NTF) and a C-terminal long fragment (EphB2-LF). EphB2-LF is further cleaved by MMPs, producing EphB2/CTF1 which is further cleaved by the PS1/gamma-secretase producing EphB2/CTF2. In terms of processing, polyubiquitinated; ligand binding stimulates ubiquitination. Ubiquitinated by RNF186 at Lys-892, mainly through 'Lys-27'-linked polyubiquitin chains.

Its subcellular location is the cell membrane. It localises to the cell projection. It is found in the axon. The protein resides in the dendrite. The catalysed reaction is L-tyrosyl-[protein] + ATP = O-phospho-L-tyrosyl-[protein] + ADP + H(+). Its function is as follows. Receptor tyrosine kinase which binds promiscuously transmembrane ephrin-B family ligands residing on adjacent cells, leading to contact-dependent bidirectional signaling into neighboring cells. The signaling pathway downstream of the receptor is referred to as forward signaling while the signaling pathway downstream of the ephrin ligand is referred to as reverse signaling. Functions in axon guidance during development. In addition to axon guidance, also regulates dendritic spines development and maturation and stimulates the formation of excitatory synapses. This Coturnix japonica (Japanese quail) protein is Ephrin type-B receptor 2 (EPHB2).